The following is a 227-amino-acid chain: Iron-regulated surface determinant protein C (227 aa).

The signal sequence occupies residues 1-28 (MKNILKVFNTTILALIIIIATFSNSANA). In terms of domain architecture, NEAT spans 29 to 150 (ADSGTLNYEV…KFNGPTDVAG (122 aa)). Positions 47, 48, 132, and 136 each coordinate heme. The interval 149–191 (AGANAPGKDDKNSASGSDKGSDGATTGQSESNSSNKDKVENPQ) is disordered. The span at 161–172 (SASGSDKGSDGA) shows a compositional bias: low complexity. Residues 173–182 (TTGQSESNSS) are compositionally biased toward polar residues. An NPQTN sorting signal motif is present at residues 189–193 (NPQTN). Pentaglycyl murein peptidoglycan amidated threonine is present on Thr-192. A propeptide spans 193–227 (NAGTPAYIYAIPVASLALLIAITLFVRKKSKGNVE) (removed by sortase B).

It belongs to the IsdC family. In terms of assembly, monomer. Interacts with IsdA.

The protein localises to the secreted. Its subcellular location is the cell wall. In terms of biological role, involved in heme (porphyrin) scavenging. Binds hemoglobin and almost exclusively free-base protoporphyrin IX. Probably has a role as the central conduit of the isd heme uptake system, i.e. mediates the transfer of the iron-containing nutrient from IsdABH to the membrane translocation system IsdDEF. Hemin-free IsdC (apo-IsdC) acquires hemin from hemin-containing IsdA (holo-IsdA) probably through the activated holo-IsdA-apo-IsdC complex and due to the higher affinity of apo-IsdC for the cofactor. The reaction is reversible. In Staphylococcus aureus (strain bovine RF122 / ET3-1), this protein is Iron-regulated surface determinant protein C (isdC).